The primary structure comprises 391 residues: NAD(P)H-quinone oxidoreductase subunit H, chloroplastic (391 aa).

The protein belongs to the complex I 49 kDa subunit family. In terms of assembly, NDH is composed of at least 16 different subunits, 5 of which are encoded in the nucleus.

The protein resides in the plastid. Its subcellular location is the chloroplast thylakoid membrane. It carries out the reaction a plastoquinone + NADH + (n+1) H(+)(in) = a plastoquinol + NAD(+) + n H(+)(out). The catalysed reaction is a plastoquinone + NADPH + (n+1) H(+)(in) = a plastoquinol + NADP(+) + n H(+)(out). In terms of biological role, NDH shuttles electrons from NAD(P)H:plastoquinone, via FMN and iron-sulfur (Fe-S) centers, to quinones in the photosynthetic chain and possibly in a chloroplast respiratory chain. The immediate electron acceptor for the enzyme in this species is believed to be plastoquinone. Couples the redox reaction to proton translocation, and thus conserves the redox energy in a proton gradient. The polypeptide is NAD(P)H-quinone oxidoreductase subunit H, chloroplastic (Chaetosphaeridium globosum (Charophycean green alga)).